Consider the following 542-residue polypeptide: ABC transport system permease protein p69 (542 aa).

The next 12 membrane-spanning stretches (helical) occupy residues 23 to 43 (ALAIIVLVVIIYSFIDNFSGF), 77 to 97 (IFYVVSGSILGFVIALWFSYL), 114 to 134 (FTIFLRSFPVLVFAFLFNNLF), 140 to 160 (ATLTITWFSWLWSTKYITAFF), 212 to 232 (LSIAGITGIGELIATPLGGTV), 236 to 256 (LVLIPMLTLIGFLLFLEASVF), 287 to 307 (VMIYILALVLAAFTLANLVQL), 350 to 370 (TQAISLITLVFVLALLFGFLA), 386 to 406 (LLVIRVIPSVLLFRLFDPIIF), 412 to 432 (IIFVLAIHSAASYGQLITINF), 481 to 501 (LVVFGIFGGSIIGGRINNFFE), and 509 to 529 (GTITLPLMVYLMVFEVILMAV). Residues 349-526 (TTQAISLITL…VYLMVFEVIL (178 aa)) form the ABC transmembrane type-1 domain.

It belongs to the binding-protein-dependent transport system permease family.

The protein resides in the cell membrane. Its function is as follows. Probably part of a high-affinity transport system. In Mycoplasma pneumoniae (strain ATCC 29342 / M129 / Subtype 1) (Mycoplasmoides pneumoniae), this protein is ABC transport system permease protein p69 (p69).